Here is a 90-residue protein sequence, read N- to C-terminus: DNA-binding protein HU (90 aa).

It belongs to the bacterial histone-like protein family. In terms of assembly, homodimer.

Functionally, histone-like DNA-binding protein which is capable of wrapping DNA to stabilize it, and thus to prevent its denaturation under extreme environmental conditions. This Haemophilus influenzae (strain ATCC 51907 / DSM 11121 / KW20 / Rd) protein is DNA-binding protein HU (hup).